A 236-amino-acid polypeptide reads, in one-letter code: 3-oxoacyl-[acyl-carrier-protein] reductase (236 aa).

An N-acetylmethionine modification is found at methionine 1. NADP(+) is bound by residues serine 11–isoleucine 14 and arginine 34–asparagine 35. An N6-acetyllysine modification is found at lysine 40. NADP(+)-binding positions include aspartate 56 and alanine 83 to glycine 85. N6-acetyllysine is present on lysine 96. Residue serine 134 participates in substrate binding. NADP(+) is bound by residues tyrosine 147, lysine 151, and isoleucine 180–threonine 182. Tyrosine 147 functions as the Proton acceptor in the catalytic mechanism. The residue at position 194 (lysine 194) is an N6-acetyllysine.

This sequence belongs to the short-chain dehydrogenases/reductases (SDR) family. As to quaternary structure, homotetramer (in vitro). Heterotetramer with HSD17B8; contains two molecules each of HSD17B8 and CBR4. Does not form homotetramers when HSD17B8 is coexpressed, only heterotetramers (in vitro).

It is found in the mitochondrion matrix. It carries out the reaction a (3R)-hydroxyacyl-[ACP] + NADP(+) = a 3-oxoacyl-[ACP] + NADPH + H(+). The catalysed reaction is a quinone + NADPH + H(+) = a quinol + NADP(+). It functions in the pathway lipid metabolism; fatty acid biosynthesis. Functionally, component of the heterotetramer complex KAR (3-ketoacyl-[acyl carrier protein] reductase or 3-ketoacyl-[ACP] reductase) that forms part of the mitochondrial fatty acid synthase (mtFAS). Beta-subunit of the KAR heterotetramer complex, responsible for the 3-ketoacyl-ACP reductase activity of the mtFAS, reduces 3-oxoacyl-[ACP] to (3R)-hydroxyacyl-[ACP] in a NADPH-dependent manner with no chain length preference, thereby participating in mitochondrial fatty acid biosynthesis. The homotetramer has NADPH-dependent quinone reductase activity (in vitro), hence could play a role in protection against cytotoxicity of exogenous quinones. As a heterotetramer, it can also reduce 9,10-phenanthrenequinone, 1,4-benzoquinone and various other o-quinones and p-quinones (in vitro). The polypeptide is 3-oxoacyl-[acyl-carrier-protein] reductase (Cbr4) (Mus musculus (Mouse)).